The chain runs to 79 residues: Schistosomin (79 aa).

Contains four disulfide bonds. As to expression, growth-controlling neurosecretory light green cells, in the cerebral ganglia of the CNS.

The protein localises to the secreted. Its function is as follows. Anti-gonadotropic neuropeptide. It also decreases the binding capacity of calfluxin to membrane-bound receptors of the albumen gland. This leads to inhibition of the reproductive activities of the infected snail. The chain is Schistosomin from Lymnaea stagnalis (Great pond snail).